The primary structure comprises 211 residues: Transcriptional regulator GfcR (211 aa).

Belongs to the purine/pyrimidine phosphoribosyltransferase family. GfcR subfamily.

DNA-binding transcriptional regulator that functions as a regulator of central sugar catabolic pathways. The sequence is that of Transcriptional regulator GfcR from Halorubrum lacusprofundi (strain ATCC 49239 / DSM 5036 / JCM 8891 / ACAM 34).